A 28-amino-acid polypeptide reads, in one-letter code: Probable small spore coat assembly protein B (28 aa).

The chain crosses the membrane as a helical span at residues 4-24; that stretch reads VFAGGFALLVVLFILLIIIGA.

This sequence belongs to the SscA family.

Its subcellular location is the membrane. This is Probable small spore coat assembly protein B from Bacillus subtilis (strain 168).